Reading from the N-terminus, the 211-residue chain is MIIKVIPVGPIAVNCSVVADEKSGEAIIIDPGAEAEKILEAVKDFKVVGIVATHGHIDHVGQVGKLKELFDVPFYMNPLDKFLINDEIWSGFASYIGAVPCPEPDVEISEGDVIRVGDVEFKVLHTPGHTPGLCCLYEEKRRVLIAGDLLFKGSVGRWDLPGGNLVELKKSVKRVLTELPQDTLVICGHYDETTIGQERAFNPFAGELLNG.

Zn(2+)-binding residues include histidine 54, histidine 56, aspartate 58, histidine 59, histidine 129, aspartate 148, and histidine 189.

Belongs to the metallo-beta-lactamase superfamily. Glyoxalase II family. Zn(2+) serves as cofactor.

This is an uncharacterized protein from Aquifex aeolicus (strain VF5).